The sequence spans 85 residues: Small ribosomal subunit protein bS16 (85 aa).

Belongs to the bacterial ribosomal protein bS16 family.

This chain is Small ribosomal subunit protein bS16, found in Pseudomonas savastanoi pv. phaseolicola (strain 1448A / Race 6) (Pseudomonas syringae pv. phaseolicola (strain 1448A / Race 6)).